Reading from the N-terminus, the 261-residue chain is Triosephosphate isomerase (261 aa).

10–12 (NWK) provides a ligand contact to substrate. His100 serves as the catalytic Electrophile. Glu172 functions as the Proton acceptor in the catalytic mechanism. Residues Gly178, Ser218, and 239–240 (GG) each bind substrate.

Belongs to the triosephosphate isomerase family. As to quaternary structure, homodimer.

Its subcellular location is the cytoplasm. It carries out the reaction D-glyceraldehyde 3-phosphate = dihydroxyacetone phosphate. It functions in the pathway carbohydrate biosynthesis; gluconeogenesis. Its pathway is carbohydrate degradation; glycolysis; D-glyceraldehyde 3-phosphate from glycerone phosphate: step 1/1. In terms of biological role, involved in the gluconeogenesis. Catalyzes stereospecifically the conversion of dihydroxyacetone phosphate (DHAP) to D-glyceraldehyde-3-phosphate (G3P). This Mycobacterium tuberculosis (strain CDC 1551 / Oshkosh) protein is Triosephosphate isomerase.